The chain runs to 445 residues: Phosphoglucosamine mutase (445 aa).

S102 serves as the catalytic Phosphoserine intermediate. Residues S102, D240, D242, and D244 each contribute to the Mg(2+) site. Position 102 is a phosphoserine (S102).

This sequence belongs to the phosphohexose mutase family. The cofactor is Mg(2+). Activated by phosphorylation.

The catalysed reaction is alpha-D-glucosamine 1-phosphate = D-glucosamine 6-phosphate. Catalyzes the conversion of glucosamine-6-phosphate to glucosamine-1-phosphate. This is Phosphoglucosamine mutase from Mycolicibacterium vanbaalenii (strain DSM 7251 / JCM 13017 / BCRC 16820 / KCTC 9966 / NRRL B-24157 / PYR-1) (Mycobacterium vanbaalenii).